The chain runs to 1868 residues: Inactive histone-lysine N-methyltransferase 2E (1868 aa).

Residues 63 to 66 (DHNY) carry the HCFC1-binding motif (HBM) motif. The segment at 118–166 (VTRCICGFTHDDGYMICCDKCSVWQHIDCMGIDRQHIPDTYLCERCQPR) adopts a PHD-type zinc-finger fold. The Zn(2+) site is built by Cys-121, Cys-123, Cys-135, Cys-138, His-143, Cys-146, Cys-160, and Cys-163. Disordered stretches follow at residues 178–197 (RRKR…SGDE), 217–268 (ASRV…SSDS), and 308–329 (GSGN…SLFR). Residues 330-447 (PPVESHIQKN…KGTEITIAFD (118 aa)) form the SET domain. O-linked (GlcNAc) serine glycosylation occurs at Ser-435. A glycan (O-linked (GlcNAc) threonine) is linked at Thr-440. Residues 472-504 (KRSSESTENINSGYETRRKKGKKEKDTSKEKDI) form a disordered region. The segment covering 494–504 (KEKDTSKEKDI) has biased composition (basic and acidic residues). Residues 559 to 613 (VEMESEEQIAERKRKMTREERKMEAILQAFARLEKREKRREQALERISTAKTEVK) adopt a coiled-coil conformation. Positions 646 to 670 (NRTKQRKSFSRSRTHIGQQRRRHRT) are enriched in basic residues. The interval 646–682 (NRTKQRKSFSRSRTHIGQQRRRHRTVSMCSDIPPSSP) is disordered. Residues Ser-837 and Ser-845 each carry the phosphoserine modification. The span at 884 to 908 (YSESSTPTPSPYATPTHTDITPTDP) shows a compositional bias: low complexity. 2 disordered regions span residues 884 to 924 (YSES…ETYR) and 1038 to 1068 (SMET…SSWV). A compositionally biased stretch (polar residues) spans 1049–1068 (PSNQLDSTHSGRGTMYSSWV). Ser-1070 bears the Phosphoserine mark. Disordered stretches follow at residues 1165-1222 (KRQR…PPPA), 1236-1315 (SSEE…SNHI), 1334-1565 (PDAE…QNQQ), and 1585-1842 (VFTS…QASP). Positions 1184 to 1197 (SVSPHPSGSLSSSG) are enriched in low complexity. The span at 1203 to 1213 (SSENGEQAENQ) shows a compositional bias: polar residues. Residue Ser-1282 is modified to Phosphoserine. Positions 1282 to 1291 (SDHRKDKDSG) are enriched in basic and acidic residues. Composition is skewed to low complexity over residues 1294 to 1312 (SPCV…SSHS) and 1348 to 1363 (PSPD…SKPG). At Ser-1364 the chain carries Phosphoserine. Composition is skewed to polar residues over residues 1389 to 1421 (ATVS…QNHA), 1451 to 1463 (HTEN…TPHT), and 1488 to 1498 (SQSPQVGTPQR). Residues 1506–1518 (AAAQNLQANPQQA) show a composition bias toward low complexity. Polar residues predominate over residues 1519–1547 (TSGALFTQTPSGQSSATYSQFNQQSLNST). Positions 1548–1558 (APPPPPPPPPS) are enriched in pro residues. Polar residues predominate over residues 1585–1603 (VFTSGPNQALPGSTSQQSV). Positions 1631–1642 (VPPPPPPPPAPG) are enriched in pro residues. Residues 1647–1656 (QQPSSHQQHS) show a composition bias toward polar residues. Residues 1682 to 1692 (LPPPPPPPGPA) are compositionally biased toward pro residues. Positions 1706–1716 (QSLQAQHQHVV) are enriched in polar residues. Positions 1719–1732 (APPPPPPPPPPPPA) are enriched in pro residues. The segment covering 1806–1816 (QGPNSIPTPTA) has biased composition (polar residues).

It belongs to the class V-like SAM-binding methyltransferase superfamily. Histone-lysine methyltransferase family. TRX/MLL subfamily. Component of a complex composed of KMT2E, OGT and USP7; the complex stabilizes KMT2E, preventing KMT2E ubiquitination and proteasomal-mediated degradation. Interacts (via N-terminus) with OGT (via TRP repeats). Interacts with deubiquitinating enzyme USP7 (via MATH domain). Interacts (via HBM motif) with HCFC1 (via Kelch domain). Interacts with E2F1; the interaction is probably indirect and is mediated via HCFC1. In terms of processing, ubiquitinated. Deubiquitinated by USP7. O-glycosylated at Ser-435 and Thr-440 in the SET domain by OGT which probably prevents KMT2E proteasomal-mediated degradation.

The protein resides in the chromosome. It localises to the cytoplasm. The protein localises to the cytoskeleton. Its subcellular location is the microtubule organizing center. It is found in the centrosome. The protein resides in the nucleus speckle. Its function is as follows. Associates with chromatin regions downstream of transcriptional start sites of active genes and thus regulates gene transcription. Chromatin interaction is mediated via the binding to tri-methylated histone H3 at 'Lys-4' (H3K4me3). Key regulator of hematopoiesis involved in terminal myeloid differentiation and in the regulation of hematopoietic stem cell (HSCs) self-renewal by a mechanism that involves DNA methylation. Also acts as an important cell cycle regulator, participating in cell cycle regulatory network machinery at multiple cell cycle stages including G1/S transition, S phase progression and mitotic entry. Recruited to E2F1 responsive promoters by HCFC1 where it stimulates tri-methylation of histone H3 at 'Lys-4' and transcriptional activation and thereby facilitates G1 to S phase transition. During myoblast differentiation, required to suppress inappropriate expression of S-phase-promoting genes and maintain expression of determination genes in quiescent cells. The sequence is that of Inactive histone-lysine N-methyltransferase 2E (Kmt2e) from Mus musculus (Mouse).